Consider the following 843-residue polypeptide: Tetratricopeptide repeat protein 7B (843 aa).

One copy of the TPR 1 repeat lies at Q97 to T131. Phosphoserine occurs at positions 160 and 202. 6 TPR repeats span residues E219–R252, S363–E396, F397–D430, T479–D514, Q516–D548, and A549–N582. Phosphoserine is present on residues S625, S629, S630, S673, S677, S678, and S681. TPR repeat units follow at residues A696–S729, H730–H763, K765–A797, and H798–S831.

In terms of assembly, component of a phosphatidylinositol 4-kinase (PI4K) complex, composed of PI4KA, EFR3 (EFR3A or EFR3B), TTC7 (TTC7A or TTC7B) and HYCC (HYCC1 or HYCC2). Interacts with PI4KA, interaction is direct. Interacts with EFR3 (EFR3A or EFR3B), interaction is direct. Interacts with HYCC (HYCC1 or HYCC2), interaction is direct. Association with the PI4K complex is strongly reduced by TMEM150A.

It is found in the cytoplasm. It localises to the cytosol. Its subcellular location is the cell membrane. Its function is as follows. Component of a complex required to localize phosphatidylinositol 4-kinase (PI4K) to the plasma membrane. The complex acts as a regulator of phosphatidylinositol 4-phosphate (PtdIns(4)P) synthesis. In the complex, plays a central role in bridging PI4KA to EFR3B and HYCC1, via direct interactions. The chain is Tetratricopeptide repeat protein 7B from Mus musculus (Mouse).